The sequence spans 90 residues: Small ribosomal subunit protein bS20 (90 aa).

It belongs to the bacterial ribosomal protein bS20 family.

Binds directly to 16S ribosomal RNA. The sequence is that of Small ribosomal subunit protein bS20 from Nautilia profundicola (strain ATCC BAA-1463 / DSM 18972 / AmH).